The sequence spans 1127 residues: Testis-expressed protein 2 (1127 aa).

2 disordered regions span residues 1-27 and 133-279; these read MTSLYGRHAEKTTDMPKPSAPKVHVQR and AVSP…SFFK. The span at 133–187 shows a compositional bias: low complexity; sequence AVSPGSSSSGPLASSPSVSSLSEQKTSSSSPLSSPSKSPILSSSASTSTLSSAKP. Phosphoserine is present on S196. The span at 249–275 shows a compositional bias: polar residues; it reads QFTQPRNTGGDSKTAPSSPLTSPSDTR. Residue T262 is modified to Phosphothreonine. Residues S265, S266, S270, and S295 each carry the phosphoserine modification. N330 carries N-linked (GlcNAc...) asparagine glycosylation. The disordered stretch occupies residues 348–386; that stretch reads EEECDSEGDGYGSDSNIPRSDHPKSTGEPTREIELKSSQ. Over residues 366–382 the composition is skewed to basic and acidic residues; the sequence is RSDHPKSTGEPTREIEL. 2 helical membrane-spanning segments follow: residues 475 to 495 and 497 to 517; these read TLGFFIMCVYVYLILPLPHYV and GLFLGIGLGFMTAVCVIWFFT. Disordered regions lie at residues 648–685, 715–764, 786–816, and 947–980; these read KAQTDKETSEEKPPAEGSEDPKKPPRPQEGTRSSQRDQ, KKSS…QKEL, QESRSPQRSPLQSAESSPTAGKKLPEVPPSE, and DEESSSAGSSEEDDAPEPSGGDKQLLPGAEGYVG. Residues 650-670 show a composition bias toward basic and acidic residues; that stretch reads QTDKETSEEKPPAEGSEDPKK. S732, S738, S744, S748, S751, S798, and S815 each carry phosphoserine. Residues 735-750 are compositionally biased toward polar residues; it reads NSPSGHLTHSRSSSKG. A compositionally biased stretch (polar residues) spans 787–804; sequence ESRSPQRSPLQSAESSPT. Residues 816 to 1101 enclose the SMP-LTD domain; that stretch reads EEEEQEAWVN…MPNMDDVYIT (286 aa). The span at 947 to 962 shows a compositional bias: acidic residues; it reads DEESSSAGSSEEDDAP.

The protein localises to the endoplasmic reticulum membrane. Its subcellular location is the nucleus membrane. During endoplasmic reticulum (ER) stress or when cellular ceramide levels increase, may induce contacts between the ER and medial-Golgi complex to facilitate non-vesicular transport of ceramides from the ER to the Golgi complex where they are converted to complex sphingolipids, preventing toxic ceramide accumulation. The sequence is that of Testis-expressed protein 2 (TEX2) from Homo sapiens (Human).